The primary structure comprises 447 residues: Citrate synthase-like protein oryE (447 aa).

Residues His-331 and Asp-387 contribute to the active site.

The protein belongs to the citrate synthase family.

It functions in the pathway secondary metabolite biosynthesis. Citrate synthase-like protein; part of the gene cluster that mediates the biosynthesis of oryzines, natural products with an unusual maleidride backbone. The two subunits of the fungal fatty acid synthase oryfasA and oryfasB probably form octenoic acid. This fatty acid is most likely activated by the acyl-CoA ligase oryP to give octenyl-CoA before the citrate synthase-like protein oryE catalyzes condensation with oxaloacetate to form tricarboxylic acid. The next steps of the pathways are conjectural, but a favorite possible route has been proposed, beginning with decarboxylation and concomitant dehydration by the decarboxylase oryM, followed by tautomerization, which may lead to the production of a diene intermediate. Reduction of this diene intermediate could give the known metabolite piliformic acid. On the pathway to oryzine B and oryzine A, however, hydroxylation of the diene by the alpha-ketoglutarate-dependent dioxygenase oryG and lactonisation by the lactonohydrolases oryH or oryL could give oryzine B directly. Finally, enoyl reduction by the dehydrogenase oryD would then convert oryzine B into oryzine A. This chain is Citrate synthase-like protein oryE, found in Aspergillus oryzae (strain ATCC 42149 / RIB 40) (Yellow koji mold).